Reading from the N-terminus, the 302-residue chain is Phosphoribosylaminoimidazole-succinocarboxamide synthase (302 aa).

This sequence belongs to the SAICAR synthetase family.

It catalyses the reaction 5-amino-1-(5-phospho-D-ribosyl)imidazole-4-carboxylate + L-aspartate + ATP = (2S)-2-[5-amino-1-(5-phospho-beta-D-ribosyl)imidazole-4-carboxamido]succinate + ADP + phosphate + 2 H(+). The protein operates within purine metabolism; IMP biosynthesis via de novo pathway; 5-amino-1-(5-phospho-D-ribosyl)imidazole-4-carboxamide from 5-amino-1-(5-phospho-D-ribosyl)imidazole-4-carboxylate: step 1/2. The chain is Phosphoribosylaminoimidazole-succinocarboxamide synthase from Leptothrix cholodnii (strain ATCC 51168 / LMG 8142 / SP-6) (Leptothrix discophora (strain SP-6)).